Consider the following 482-residue polypeptide: Methylenetetrahydrofolate--tRNA-(uracil-5-)-methyltransferase TrmFO (482 aa).

11 to 16 (GAGLAG) lines the FAD pocket.

The protein belongs to the MnmG family. TrmFO subfamily. It depends on FAD as a cofactor.

The protein resides in the cytoplasm. The catalysed reaction is uridine(54) in tRNA + (6R)-5,10-methylene-5,6,7,8-tetrahydrofolate + NADH + H(+) = 5-methyluridine(54) in tRNA + (6S)-5,6,7,8-tetrahydrofolate + NAD(+). The enzyme catalyses uridine(54) in tRNA + (6R)-5,10-methylene-5,6,7,8-tetrahydrofolate + NADPH + H(+) = 5-methyluridine(54) in tRNA + (6S)-5,6,7,8-tetrahydrofolate + NADP(+). Its function is as follows. Catalyzes the folate-dependent formation of 5-methyl-uridine at position 54 (M-5-U54) in all tRNAs. The chain is Methylenetetrahydrofolate--tRNA-(uracil-5-)-methyltransferase TrmFO from Nitratidesulfovibrio vulgaris (strain DP4) (Desulfovibrio vulgaris).